A 593-amino-acid chain; its full sequence is MRSHYCGDINRSHLGQEVTLVGWVNRSRDLGGVVFLDLRDREGLVQVVYDPDLKDVFDVASSLRGEFCVQVTGLVRARPDSQINSQMKTGEIEVLGKGLTIINASAPLPLSMDNHQNNSEEQRLKYRYLDLRRPEMAERLIFRAKVTSAVRRFLDSNGFLDIETPILTKATPEGARDYLVPSRTYKGQFFALPQSPQLFKQLLMMSGFDRYYQIVKCFRDEDLRADRQPEFTQIDIETSFMTSEEVMVKTEEMMRGLFLELLNVDLGEFPRMTYNEAMRRFGSDKPDLRNPLELVDVADLLKEVEFAVFNGPANDEEGRVAALRIPNGATLSRKQIDDYTKFVGIYGAKGLAWMKINDLAAGMEGIQSPVLKFLTESIVNDIISRTGAQTGDIILFGADKANVVAEAMGALRLKAGEDFELLEGQWRPLWVIDFPMFEKINGGFHAVHHPFTAPRGVTAAELEANPANRVSDAYDMVLNGCELGGGSVRIHNAEMQSAVFRILGIEEEEAKEKFGFLLEALRYGTPPHAGLAFGLDRIIMLMTGATSIRDVMAFPKTTTAACPLTNAPGFANPAQLTELGIKVVEKVKVADGE.

L-aspartate is bound at residue glutamate 173. The aspartate stretch occupies residues 197–200; sequence QLFK. Position 219 (arginine 219) interacts with L-aspartate. ATP-binding positions include 219–221 and glutamine 228; that span reads RDE. Histidine 448 provides a ligand contact to L-aspartate. Glutamate 482 is a binding site for ATP. L-aspartate is bound at residue arginine 489. 534–537 is an ATP binding site; the sequence is GLDR.

This sequence belongs to the class-II aminoacyl-tRNA synthetase family. Type 1 subfamily. Homodimer.

Its subcellular location is the cytoplasm. The catalysed reaction is tRNA(Asp) + L-aspartate + ATP = L-aspartyl-tRNA(Asp) + AMP + diphosphate. Functionally, catalyzes the attachment of L-aspartate to tRNA(Asp) in a two-step reaction: L-aspartate is first activated by ATP to form Asp-AMP and then transferred to the acceptor end of tRNA(Asp). The sequence is that of Aspartate--tRNA ligase from Shewanella denitrificans (strain OS217 / ATCC BAA-1090 / DSM 15013).